The following is a 916-amino-acid chain: Bifunctional aspartokinase/homoserine dehydrogenase 2, chloroplastic (916 aa).

The N-terminal 87 residues, 1–87 (MATLKPSFTV…VDQVQIPKGE (87 aa)), are a transit peptide targeting the chloroplast. An aspartokinase region spans residues 88 to 336 (MWSVHKFGGT…VNEAVILQTL (249 aa)). The segment at 337–562 (SYQEAWEMSY…LSRTTLAMGI (226 aa)) is interface. ACT domains lie at 412–487 (VEGT…VIPN) and 493–570 (AVGQ…LIGA). Residues 563–916 (VGPGLIGATL…RLASYLGAPS (354 aa)) form a homoserine dehydrogenase region. Isoleucine 568 provides a ligand contact to NAD(+). Residues isoleucine 568, lysine 600, threonine 649, and lysine 673 each coordinate NADP(+). An NADPH-binding site is contributed by isoleucine 568. Threonine 649 is a binding site for NAD(+). NADPH is bound by residues threonine 649 and lysine 673. Residues glutamate 700, valine 703, alanine 705, and leucine 707 each contribute to the Na(+) site. Residues glycine 758 and glutamate 761 each contribute to the NADP(+) site. Residues glutamate 761 and aspartate 772 each coordinate L-homoserine. Residue lysine 776 is the Proton donor of the active site. Glycine 893 is an NAD(+) binding site. Glycine 893 lines the NADP(+) pocket. Glycine 893 provides a ligand contact to NADPH.

This sequence in the N-terminal section; belongs to the aspartokinase family. In the C-terminal section; belongs to the homoserine dehydrogenase family. As to quaternary structure, homo- or heterodimer. Requires a metal cation as cofactor.

The protein resides in the plastid. It localises to the chloroplast. It catalyses the reaction L-homoserine + NADP(+) = L-aspartate 4-semialdehyde + NADPH + H(+). The catalysed reaction is L-homoserine + NAD(+) = L-aspartate 4-semialdehyde + NADH + H(+). It carries out the reaction L-aspartate + ATP = 4-phospho-L-aspartate + ADP. Its pathway is amino-acid biosynthesis; L-lysine biosynthesis via DAP pathway; (S)-tetrahydrodipicolinate from L-aspartate: step 1/4. It functions in the pathway amino-acid biosynthesis; L-methionine biosynthesis via de novo pathway; L-homoserine from L-aspartate: step 1/3. The protein operates within amino-acid biosynthesis; L-methionine biosynthesis via de novo pathway; L-homoserine from L-aspartate: step 3/3. It participates in amino-acid biosynthesis; L-threonine biosynthesis; L-threonine from L-aspartate: step 1/5. Its pathway is amino-acid biosynthesis; L-threonine biosynthesis; L-threonine from L-aspartate: step 3/5. With respect to regulation, threonine interaction with Gln-443 leads to inhibition of aspartate kinase activity and facilitates the binding of a second threonine on Gln-524, leading to a partial inhibition of homoserine dehydrogenase activity (25% of activity remaining at saturation with threonine). Homoserine dehydrogenase activity is also partially inhibited by cysteine (15% of activity remaining at saturation with cysteine). No synergy between threonine and cysteine for the inhibition. 13-fold activation of aspartate kinase activity by cysteine, isoleucine, valine, serine and alanine at 2.5 mM and 4-fold activation by leucine at 2.5 mM, but no activation of homoserine dehydrogenase activity. Bifunctional aspartate kinase and homoserine dehydrogenase that catalyzes the first and the third steps toward the synthesis of lysine, methionine and threonine from aspartate. The polypeptide is Bifunctional aspartokinase/homoserine dehydrogenase 2, chloroplastic (AKHSDH2) (Arabidopsis thaliana (Mouse-ear cress)).